A 661-amino-acid chain; its full sequence is Acetyl-coenzyme A synthetase (661 aa).

CoA-binding positions include 197 to 200 (RGGK) and T320. ATP is bound by residues 396–398 (GEP), 420–425 (DTWWQT), D511, and R526. S534 is a binding site for CoA. R537 contacts ATP. Residues V548 and V553 each coordinate Mg(2+). K620 bears the N6-acetyllysine mark.

Belongs to the ATP-dependent AMP-binding enzyme family. The cofactor is Mg(2+). In terms of processing, acetylated. Deacetylation by the SIR2-homolog deacetylase activates the enzyme.

It carries out the reaction acetate + ATP + CoA = acetyl-CoA + AMP + diphosphate. Catalyzes the conversion of acetate into acetyl-CoA (AcCoA), an essential intermediate at the junction of anabolic and catabolic pathways. AcsA undergoes a two-step reaction. In the first half reaction, AcsA combines acetate with ATP to form acetyl-adenylate (AcAMP) intermediate. In the second half reaction, it can then transfer the acetyl group from AcAMP to the sulfhydryl group of CoA, forming the product AcCoA. This Leptospira interrogans serogroup Icterohaemorrhagiae serovar copenhageni (strain Fiocruz L1-130) protein is Acetyl-coenzyme A synthetase.